Consider the following 334-residue polypeptide: N-acetyl-gamma-glutamyl-phosphate reductase (334 aa).

Cys154 is an active-site residue.

The protein belongs to the NAGSA dehydrogenase family. Type 1 subfamily.

It localises to the cytoplasm. The enzyme catalyses N-acetyl-L-glutamate 5-semialdehyde + phosphate + NADP(+) = N-acetyl-L-glutamyl 5-phosphate + NADPH + H(+). It functions in the pathway amino-acid biosynthesis; L-arginine biosynthesis; N(2)-acetyl-L-ornithine from L-glutamate: step 3/4. Catalyzes the NADPH-dependent reduction of N-acetyl-5-glutamyl phosphate to yield N-acetyl-L-glutamate 5-semialdehyde. This chain is N-acetyl-gamma-glutamyl-phosphate reductase, found in Shigella flexneri.